Here is a 184-residue protein sequence, read N- to C-terminus: Photosystem I assembly protein Ycf4 (184 aa).

The next 2 membrane-spanning stretches (helical) occupy residues 22–42 (FCWA…GTSS) and 57–77 (IIFF…LFIS).

Belongs to the Ycf4 family.

Its subcellular location is the plastid. It is found in the chloroplast thylakoid membrane. Functionally, seems to be required for the assembly of the photosystem I complex. The protein is Photosystem I assembly protein Ycf4 of Platanus occidentalis (Sycamore).